Here is a 209-residue protein sequence, read N- to C-terminus: High mobility group protein B2 (209 aa).

K3 is modified (N6-acetyllysine). The HMG box 1 DNA-binding region spans 9–79 (PRGKMSSYAF…RYDREMKNYV (71 aa)). C23 carries the cysteine sulfonic acid (-SO3H); alternate modification. Residues C23 and C45 are joined by a disulfide bond. K30 is modified (N6-acetyllysine). At S35 the chain carries Phosphoserine. N6-acetyllysine is present on K43. C45 bears the Cysteine sulfonic acid (-SO3H); alternate mark. Over residues 52–76 (MSAKEKSKFEDMAKSDKARYDREMK) the composition is skewed to basic and acidic residues. Disordered stretches follow at residues 52–150 (MSAK…KAAK) and 162–209 (YRAK…EDEE). K90 bears the N6-acetyllysine mark. Positions 95–163 (PKRPPSAFFL…KYEKDIAAYR (69 aa)) form a DNA-binding region, HMG box 2. The residue at position 100 (S100) is a Phosphoserine. A Cysteine sulfonic acid (-SO3H) modification is found at C106. Basic and acidic residues-rich tracts occupy residues 107 to 117 (SEHRPKIKSEH), 137 to 150 (SAKD…KAAK), and 162 to 172 (YRAKGKSEAGK). Residues K114 and K141 each carry the N6-acetyllysine modification. The interval 165-180 (KGKSEAGKKGPGRPTG) is required for chemotactic activity. A compositionally biased stretch (acidic residues) spans 187–209 (PEDEEEEEEEEDEDEEEEDEDEE).

It belongs to the HMGB family. In terms of assembly, interacts with POU2F2, POU2F1 and POU3F1. Component of the RAG complex composed of core components RAG1 and RAG2, and associated component HMGB1 or HMGB2. Component of the SET complex, composed of at least ANP32A, APEX1, HMGB2, NME1, SET and TREX1. Directly interacts with SET. Interacts with LEF1. In terms of processing, reduction/oxidation of cysteine residues Cys-23, Cys-45 and Cys-106 and a possible intramolecular disulfide bond involving Cys-23 and Cys-45 give rise to different redox forms with specific functional activities in various cellular compartments: 1- fully reduced HMGB2 (HMGB2C23hC45hC106h), 2- disulfide HMGB2 (HMGB2C23-C45C106h) and 3- sulfonyl HMGB2 (HMGB2C23soC45soC106so).

It is found in the nucleus. The protein resides in the chromosome. The protein localises to the cytoplasm. Its subcellular location is the secreted. In terms of biological role, multifunctional protein with various roles in different cellular compartments. May act in a redox sensitive manner. In the nucleus is an abundant chromatin-associated non-histone protein involved in transcription, chromatin remodeling and V(D)J recombination and probably other processes. Binds DNA with a preference to non-canonical DNA structures such as single-stranded DNA. Can bent DNA and enhance DNA flexibility by looping thus providing a mechanism to promote activities on various gene promoters by enhancing transcription factor binding and/or bringing distant regulatory sequences into close proximity. Involved in V(D)J recombination by acting as a cofactor of the RAG complex: acts by stimulating cleavage and RAG protein binding at the 23 bp spacer of conserved recombination signal sequences (RSS). Proposed to be involved in the innate immune response to nucleic acids by acting as a cytoplasmic promiscuous immunogenic DNA/RNA sensor which cooperates with subsequent discriminative sensing by specific pattern recognition receptors. In the extracellular compartment acts as a chemokine. Promotes proliferation and migration of endothelial cells implicating AGER/RAGE. Has antimicrobial activity in gastrointestinal epithelial tissues. Involved in inflammatory response to antigenic stimulus coupled with pro-inflammatory activity. May play a role in germ cell differentiation. Involved in modulation of neurogenesis probably by regulation of neural stem proliferation. Involved in articular cartilage surface maintenance implicating LEF1 and the Wnt/beta-catenin pathway. This chain is High mobility group protein B2 (HMGB2), found in Bos taurus (Bovine).